The chain runs to 110 residues: UPF0145 protein Blon_0093/BLIJ_0092 (110 aa).

The protein belongs to the UPF0145 family.

In Bifidobacterium longum subsp. infantis (strain ATCC 15697 / DSM 20088 / JCM 1222 / NCTC 11817 / S12), this protein is UPF0145 protein Blon_0093/BLIJ_0092.